A 197-amino-acid polypeptide reads, in one-letter code: Putative carbonic anhydrase YvdA (197 aa).

4 residues coordinate Zn(2+): Cys41, Asp43, His99, and Cys102.

This sequence belongs to the beta-class carbonic anhydrase family. Zn(2+) serves as cofactor.

The enzyme catalyses hydrogencarbonate + H(+) = CO2 + H2O. Reversible hydration of carbon dioxide. In Bacillus subtilis (strain 168), this protein is Putative carbonic anhydrase YvdA (yvdA).